Reading from the N-terminus, the 123-residue chain is Small ribosomal subunit protein uS12 (123 aa).

Asp89 bears the 3-methylthioaspartic acid mark.

This sequence belongs to the universal ribosomal protein uS12 family. As to quaternary structure, part of the 30S ribosomal subunit. Contacts proteins S8 and S17. May interact with IF1 in the 30S initiation complex.

Its function is as follows. With S4 and S5 plays an important role in translational accuracy. Interacts with and stabilizes bases of the 16S rRNA that are involved in tRNA selection in the A site and with the mRNA backbone. Located at the interface of the 30S and 50S subunits, it traverses the body of the 30S subunit contacting proteins on the other side and probably holding the rRNA structure together. The combined cluster of proteins S8, S12 and S17 appears to hold together the shoulder and platform of the 30S subunit. The chain is Small ribosomal subunit protein uS12 from Syntrophobacter fumaroxidans (strain DSM 10017 / MPOB).